The sequence spans 54 residues: Photoreceptor disk component PRCD (54 aa).

Cys2 carries the S-palmitoyl cysteine lipid modification. The tract at residues 24–54 (QPEPNGVDGAVSGSSLETDLQSSGREKEPLK) is disordered. Over residues 35-46 (SGSSLETDLQSS) the composition is skewed to polar residues.

The protein belongs to the PRCD family. As to quaternary structure, interacts with RHO/rhodopsin; the interaction promotes PRCD stability. Palmitoylated at Cys-2. Palmitoylation is essential for protein stability and trafficking to the photoreceptor outer segment, but does not appear to be essential for membrane localization. Probably palmitoylated by ZDHHC3. Post-translationally, phosphorylated. In terms of tissue distribution, expressed in retina (at protein level).

It localises to the cell projection. It is found in the cilium. Its subcellular location is the photoreceptor outer segment. The protein resides in the membrane. The protein localises to the endoplasmic reticulum. It localises to the golgi apparatus. In terms of biological role, involved in vision. The sequence is that of Photoreceptor disk component PRCD from Bos taurus (Bovine).